A 169-amino-acid chain; its full sequence is Photosystem I assembly protein Ycf3 (169 aa).

TPR repeat units follow at residues 35–68, 72–105, and 120–153; these read AFTY…EIDP, SYIL…NPSL, and GEQA…APGN.

It belongs to the Ycf3 family.

The protein localises to the plastid. The protein resides in the chloroplast thylakoid membrane. Functionally, essential for the assembly of the photosystem I (PSI) complex. May act as a chaperone-like factor to guide the assembly of the PSI subunits. This is Photosystem I assembly protein Ycf3 from Huperzia lucidula (Shining clubmoss).